Here is a 421-residue protein sequence, read N- to C-terminus: Histidine--tRNA ligase (421 aa).

It belongs to the class-II aminoacyl-tRNA synthetase family. In terms of assembly, homodimer.

The protein resides in the cytoplasm. It carries out the reaction tRNA(His) + L-histidine + ATP = L-histidyl-tRNA(His) + AMP + diphosphate + H(+). The polypeptide is Histidine--tRNA ligase (Francisella tularensis subsp. holarctica (strain LVS)).